A 246-amino-acid chain; its full sequence is Azurocidin (246 aa).

An N-terminal signal peptide occupies residues 1–19 (MPALRFLALLASLLATSRV). A propeptide spanning residues 20–26 (GLATLAD) is cleaved from the precursor. One can recognise a Peptidase S1 domain in the interval 27–242 (IVGGRRAQPQ…FRNWIDSVLN (216 aa)). A disulfide bridge connects residues Cys-52 and Cys-68. Asn-139 and Asn-170 each carry an N-linked (GlcNAc...) asparagine glycan. Disulfide bonds link Cys-148-Cys-205 and Cys-178-Cys-184. A propeptide spanning residues 245-246 (PA) is cleaved from the precursor.

This sequence belongs to the peptidase S1 family. Elastase subfamily.

Its subcellular location is the cytoplasmic granule membrane. Functionally, this is a neutrophil granule-derived antibacterial and monocyte- and fibroblast-specific chemotactic glycoprotein. Binds heparin. The chain is Azurocidin from Sus scrofa (Pig).